The following is a 301-amino-acid chain: tRNA dimethylallyltransferase (301 aa).

12–19 (GPTASGKT) provides a ligand contact to ATP. A substrate-binding site is contributed by 14–19 (TASGKT). Residues 37–40 (DSLS) form an interaction with substrate tRNA region.

This sequence belongs to the IPP transferase family. As to quaternary structure, monomer. It depends on Mg(2+) as a cofactor.

It carries out the reaction adenosine(37) in tRNA + dimethylallyl diphosphate = N(6)-dimethylallyladenosine(37) in tRNA + diphosphate. Functionally, catalyzes the transfer of a dimethylallyl group onto the adenine at position 37 in tRNAs that read codons beginning with uridine, leading to the formation of N6-(dimethylallyl)adenosine (i(6)A). This Sulfurovum sp. (strain NBC37-1) protein is tRNA dimethylallyltransferase.